We begin with the raw amino-acid sequence, 579 residues long: ATP-dependent RNA helicase SUV3, mitochondrial (579 aa).

The transit peptide at 1–59 (MAVAAALLRRRALYSALASPSWLHDTSSCYICSISGTHSLVNHPNLRLQRGYHNSGKFD) directs the protein to the mitochondrion. Residues 72-213 (NAREKKRNVF…QRILEPTGDV (142 aa)) form the Helicase ATP-binding domain. 85–92 (GPTNSGKT) lines the ATP pocket. One can recognise a Helicase C-terminal domain in the interval 214-388 (VTVQYYERLS…GLFPTFDVLS (175 aa)). An N-linked (GlcNAc...) asparagine glycan is attached at Asn309.

The protein belongs to the helicase family. Homodimer; in free form. Component of the mitochondrial degradosome (mtEXO) complex which is a heteropentamer containing 2 copies of SUPV3L1 and 3 copies of PNPT1. The cofactor is Mg(2+). Requires Mn(2+) as cofactor.

The protein resides in the nucleus. Its subcellular location is the mitochondrion matrix. It localises to the mitochondrion nucleoid. The catalysed reaction is ATP + H2O = ADP + phosphate + H(+). Major helicase player in mitochondrial RNA metabolism. Component of the mitochondrial degradosome (mtEXO) complex, that degrades 3' overhang double-stranded RNA with a 3'-to-5' directionality in an ATP-dependent manner. ATPase and ATP-dependent multisubstrate helicase, able to unwind double-stranded (ds) DNA and RNA, and RNA/DNA heteroduplexes in the 5'-to-3' direction. Plays a role in the RNA surveillance system in mitochondria; regulates the stability of mature mRNAs, the removal of aberrantly formed mRNAs and the rapid degradation of non coding processing intermediates. Confers salinity and drought stress tolerances by maintaining both photosynthesis and antioxidant machinery, probably via an increase in plant hormones levels such as gibberellic acid (GA(3)), the cytokinin zeatin (Z) and indole-3-acetic acid (IAA). The protein is ATP-dependent RNA helicase SUV3, mitochondrial of Oryza sativa subsp. japonica (Rice).